Here is a 310-residue protein sequence, read N- to C-terminus: Phosphoribosylaminoimidazole-succinocarboxamide synthase (310 aa).

The protein belongs to the SAICAR synthetase family.

It carries out the reaction 5-amino-1-(5-phospho-D-ribosyl)imidazole-4-carboxylate + L-aspartate + ATP = (2S)-2-[5-amino-1-(5-phospho-beta-D-ribosyl)imidazole-4-carboxamido]succinate + ADP + phosphate + 2 H(+). Its pathway is purine metabolism; IMP biosynthesis via de novo pathway; 5-amino-1-(5-phospho-D-ribosyl)imidazole-4-carboxamide from 5-amino-1-(5-phospho-D-ribosyl)imidazole-4-carboxylate: step 1/2. The polypeptide is Phosphoribosylaminoimidazole-succinocarboxamide synthase (Xanthomonas oryzae pv. oryzae (strain MAFF 311018)).